Reading from the N-terminus, the 154-residue chain is 6,7-dimethyl-8-ribityllumazine synthase (154 aa).

Residues Phe21, 55 to 57, and 79 to 81 each bind 5-amino-6-(D-ribitylamino)uracil; these read AFE and CVI. 84–85 is a binding site for (2S)-2-hydroxy-3-oxobutyl phosphate; sequence AT. His87 functions as the Proton donor in the catalytic mechanism. Phe112 serves as a coordination point for 5-amino-6-(D-ribitylamino)uracil. Arg126 contributes to the (2S)-2-hydroxy-3-oxobutyl phosphate binding site.

This sequence belongs to the DMRL synthase family. Forms an icosahedral capsid composed of 60 subunits, arranged as a dodecamer of pentamers.

The catalysed reaction is (2S)-2-hydroxy-3-oxobutyl phosphate + 5-amino-6-(D-ribitylamino)uracil = 6,7-dimethyl-8-(1-D-ribityl)lumazine + phosphate + 2 H2O + H(+). It participates in cofactor biosynthesis; riboflavin biosynthesis; riboflavin from 2-hydroxy-3-oxobutyl phosphate and 5-amino-6-(D-ribitylamino)uracil: step 1/2. Catalyzes the formation of 6,7-dimethyl-8-ribityllumazine by condensation of 5-amino-6-(D-ribitylamino)uracil with 3,4-dihydroxy-2-butanone 4-phosphate. This is the penultimate step in the biosynthesis of riboflavin. This chain is 6,7-dimethyl-8-ribityllumazine synthase, found in Staphylococcus aureus (strain Mu50 / ATCC 700699).